Consider the following 332-residue polypeptide: MEKLYDSYDRLHDYVRLSITDRCNLRCVYCMPKEGLPFFPTDRVLSQDEIVQLIENFAAMGVSKVRITGGEPLLRTDVVEIVRRIKAVDGINDVSITTNGLFLAKLAKPLKEAGLDRLNISLDTFKADRYKKITRGGNIQQVLDGIAVASKLHFKKIKLNIVLIKGQNDDEVLDFLHYTKDHDVNARFIEFMPIGNSLKTWQKEYVGLKNVFDTCKDNGLAYHPIVLRGNGPSDNYQIEGYEGSFGLIHPISSKFCENCNRLRITADGYVKACLYWNEEIDIRSAIGDPVAFRKLIQKALDNKPLNHEMAMSETDRIIDKAPTWRHMSQIGG.

The region spanning 7–221 (SYDRLHDYVR…FDTCKDNGLA (215 aa)) is the Radical SAM core domain. Arg16 contacts GTP. Residues Cys23 and Cys27 each coordinate [4Fe-4S] cluster. Tyr29 contributes to the S-adenosyl-L-methionine binding site. Cys30 provides a ligand contact to [4Fe-4S] cluster. A GTP-binding site is contributed by Arg66. S-adenosyl-L-methionine is bound at residue Gly70. A GTP-binding site is contributed by Thr97. Ser121 contributes to the S-adenosyl-L-methionine binding site. Lys158 contributes to the GTP binding site. Residue Met192 coordinates S-adenosyl-L-methionine. [4Fe-4S] cluster is bound by residues Cys256 and Cys259. 261-263 (RLR) serves as a coordination point for GTP. Residue Cys273 participates in [4Fe-4S] cluster binding.

This sequence belongs to the radical SAM superfamily. MoaA family. As to quaternary structure, monomer and homodimer. [4Fe-4S] cluster is required as a cofactor.

The enzyme catalyses GTP + AH2 + S-adenosyl-L-methionine = (8S)-3',8-cyclo-7,8-dihydroguanosine 5'-triphosphate + 5'-deoxyadenosine + L-methionine + A + H(+). Its pathway is cofactor biosynthesis; molybdopterin biosynthesis. Functionally, catalyzes the cyclization of GTP to (8S)-3',8-cyclo-7,8-dihydroguanosine 5'-triphosphate. The polypeptide is GTP 3',8-cyclase (Lactiplantibacillus plantarum (strain ATCC BAA-793 / NCIMB 8826 / WCFS1) (Lactobacillus plantarum)).